Here is a 438-residue protein sequence, read N- to C-terminus: ATP-dependent protease ATPase subunit HslU (438 aa).

Residues valine 18, 60–65 (GVGKTE), aspartate 252, glutamate 317, and arginine 389 contribute to the ATP site.

Belongs to the ClpX chaperone family. HslU subfamily. As to quaternary structure, a double ring-shaped homohexamer of HslV is capped on each side by a ring-shaped HslU homohexamer. The assembly of the HslU/HslV complex is dependent on binding of ATP.

Its subcellular location is the cytoplasm. In terms of biological role, ATPase subunit of a proteasome-like degradation complex; this subunit has chaperone activity. The binding of ATP and its subsequent hydrolysis by HslU are essential for unfolding of protein substrates subsequently hydrolyzed by HslV. HslU recognizes the N-terminal part of its protein substrates and unfolds these before they are guided to HslV for hydrolysis. The polypeptide is ATP-dependent protease ATPase subunit HslU (Saccharophagus degradans (strain 2-40 / ATCC 43961 / DSM 17024)).